We begin with the raw amino-acid sequence, 236 residues long: tRNA1(Val) (adenine(37)-N6)-methyltransferase (236 aa).

This sequence belongs to the methyltransferase superfamily. tRNA (adenine-N(6)-)-methyltransferase family.

The protein resides in the cytoplasm. It catalyses the reaction adenosine(37) in tRNA1(Val) + S-adenosyl-L-methionine = N(6)-methyladenosine(37) in tRNA1(Val) + S-adenosyl-L-homocysteine + H(+). In terms of biological role, specifically methylates the adenine in position 37 of tRNA(1)(Val) (anticodon cmo5UAC). In Histophilus somni (strain 129Pt) (Haemophilus somnus), this protein is tRNA1(Val) (adenine(37)-N6)-methyltransferase.